Consider the following 105-residue polypeptide: Thiosulfate sulfurtransferase GlpE (105 aa).

In terms of domain architecture, Rhodanese spans 15-103; it reads MQQGAILVDI…WCRAELPIDT (89 aa). C63 functions as the Cysteine persulfide intermediate in the catalytic mechanism.

The protein belongs to the GlpE family.

It is found in the cytoplasm. It catalyses the reaction thiosulfate + hydrogen cyanide = thiocyanate + sulfite + 2 H(+). The catalysed reaction is thiosulfate + [thioredoxin]-dithiol = [thioredoxin]-disulfide + hydrogen sulfide + sulfite + 2 H(+). Its function is as follows. Transferase that catalyzes the transfer of sulfur from thiosulfate to thiophilic acceptors such as cyanide or dithiols. May function in a CysM-independent thiosulfate assimilation pathway by catalyzing the conversion of thiosulfate to sulfite, which can then be used for L-cysteine biosynthesis. This is Thiosulfate sulfurtransferase GlpE from Haemophilus influenzae (strain ATCC 51907 / DSM 11121 / KW20 / Rd).